Consider the following 107-residue polypeptide: U1-lycotoxin-Ls1b (107 aa).

Positions 1–20 are cleaved as a signal peptide; the sequence is MMKVLVVVALLATLISYSSS. Residues 21–41 constitute a propeptide that is removed on maturation; that stretch reads EGIDDLEADELLSLMANEQTR. Disulfide bonds link C44-C59, C51-C68, C58-C86, and C70-C84.

This sequence belongs to the neurotoxin 19 (CSTX) family. 04 (U1-Lctx) subfamily. Expressed by the venom gland.

It is found in the secreted. The polypeptide is U1-lycotoxin-Ls1b (Lycosa singoriensis (Wolf spider)).